We begin with the raw amino-acid sequence, 147 residues long: Large ribosomal subunit protein bL9 (147 aa).

Belongs to the bacterial ribosomal protein bL9 family.

Its function is as follows. Binds to the 23S rRNA. In Clostridium tetani (strain Massachusetts / E88), this protein is Large ribosomal subunit protein bL9.